The chain runs to 247 residues: ATP synthase subunit a, chloroplastic (247 aa).

5 helical membrane-spanning segments follow: residues 38–58, 95–115, 133–153, 199–219, and 220–240; these read QVLITSWVVIAILLGSVIIAV, VPFIGTMFLFIFVSNWSGALL, DINTTVALALPTSVAYFYAGL, LVVVVLVSLVPSVVPIPVMFL, and GLFTSGIQALIFATLAAAYIG.

The protein belongs to the ATPase A chain family. F-type ATPases have 2 components, CF(1) - the catalytic core - and CF(0) - the membrane proton channel. CF(1) has five subunits: alpha(3), beta(3), gamma(1), delta(1), epsilon(1). CF(0) has four main subunits: a, b, b' and c.

It is found in the plastid. The protein localises to the chloroplast thylakoid membrane. Its function is as follows. Key component of the proton channel; it plays a direct role in the translocation of protons across the membrane. The sequence is that of ATP synthase subunit a, chloroplastic from Phalaenopsis aphrodite subsp. formosana (Moth orchid).